A 388-amino-acid polypeptide reads, in one-letter code: UDP-N-acetylglucosamine--N-acetylmuramyl-(pentapeptide) pyrophosphoryl-undecaprenol N-acetylglucosamine transferase (388 aa).

Residues 15–17 (TGG), asparagine 125, arginine 168, serine 196, and glutamine 297 each bind UDP-N-acetyl-alpha-D-glucosamine.

The protein belongs to the glycosyltransferase 28 family. MurG subfamily.

It localises to the cell inner membrane. The enzyme catalyses di-trans,octa-cis-undecaprenyl diphospho-N-acetyl-alpha-D-muramoyl-L-alanyl-D-glutamyl-meso-2,6-diaminopimeloyl-D-alanyl-D-alanine + UDP-N-acetyl-alpha-D-glucosamine = di-trans,octa-cis-undecaprenyl diphospho-[N-acetyl-alpha-D-glucosaminyl-(1-&gt;4)]-N-acetyl-alpha-D-muramoyl-L-alanyl-D-glutamyl-meso-2,6-diaminopimeloyl-D-alanyl-D-alanine + UDP + H(+). It functions in the pathway cell wall biogenesis; peptidoglycan biosynthesis. Functionally, cell wall formation. Catalyzes the transfer of a GlcNAc subunit on undecaprenyl-pyrophosphoryl-MurNAc-pentapeptide (lipid intermediate I) to form undecaprenyl-pyrophosphoryl-MurNAc-(pentapeptide)GlcNAc (lipid intermediate II). This is UDP-N-acetylglucosamine--N-acetylmuramyl-(pentapeptide) pyrophosphoryl-undecaprenol N-acetylglucosamine transferase from Novosphingobium aromaticivorans (strain ATCC 700278 / DSM 12444 / CCUG 56034 / CIP 105152 / NBRC 16084 / F199).